The chain runs to 598 residues: Elongation factor 4 (598 aa).

One can recognise a tr-type G domain in the interval K2–S183. Residues D14–T19 and N130–D133 each bind GTP.

Belongs to the TRAFAC class translation factor GTPase superfamily. Classic translation factor GTPase family. LepA subfamily.

The protein resides in the cell inner membrane. It carries out the reaction GTP + H2O = GDP + phosphate + H(+). In terms of biological role, required for accurate and efficient protein synthesis under certain stress conditions. May act as a fidelity factor of the translation reaction, by catalyzing a one-codon backward translocation of tRNAs on improperly translocated ribosomes. Back-translocation proceeds from a post-translocation (POST) complex to a pre-translocation (PRE) complex, thus giving elongation factor G a second chance to translocate the tRNAs correctly. Binds to ribosomes in a GTP-dependent manner. The polypeptide is Elongation factor 4 (Christiangramia forsetii (strain DSM 17595 / CGMCC 1.15422 / KT0803) (Gramella forsetii)).